The following is a 333-amino-acid chain: Autoinducer 2 import system permease protein LsrD (333 aa).

Transmembrane regions (helical) follow at residues 7–27 (YGWEFTLAALLIIEILLFGIA), 45–65 (ICIGIVALPLTMVIVSGGIDI), 70–90 (TIGLCAISLGVMNQAGIPMAA), 91–111 (AIPLTLLVGAICGVINAALIL), 118–138 (LVITLGTLYLFGGSALLLSGI), 162–182 (LFGLPMPLMLFLLCVLICWLF), 212–232 (TLYLLYTLTGIASAIAAIVLV), 240–260 (SDLGASFLMPAITAVVLGGAN), 261–281 (IYGGSGSIIGTALAILLIGYL), and 288–308 (AGVPNQVSSALAGALLIIAVV).

It belongs to the binding-protein-dependent transport system permease family. AraH/RbsC subfamily. In terms of assembly, the complex is composed of two ATP-binding proteins (LsrA), two transmembrane proteins (LsrC and LsrD) and a solute-binding protein (LsrB).

It localises to the cell inner membrane. Functionally, part of the ABC transporter complex LsrABCD involved in autoinducer 2 (AI-2) import. Probably responsible for the translocation of the substrate across the membrane. The protein is Autoinducer 2 import system permease protein LsrD (lsrD) of Photorhabdus luminescens (Xenorhabdus luminescens).